A 478-amino-acid chain; its full sequence is MTANVLFPLFANLHDRAVLVVGGGKVAERKTEALLKVGALPIIGAPSLTASLQRWAETGRITWRQGTFENSWLQEDIWLVIAATDQPEVNHAAARAAHAQRLFVNVVDDIALSNVQVPAVVERGPLRIAISSGGGAPMVARYLRQQLESLIDDSWGRLTTLFAQRRDTIRARYPNIEARRRFFETQLAGPLQRLLRKQRHAEAEAVLEAALAKTPPTESGSVTLVGAGAGDAGLLTLNALRALNEADIILYDRLVSDTVLQMARRDAEQIEVGKSATGHSVRQEDIHTLMLQHARAGQRVVRLKGGDPFVFGRGGEELEFLRTHGIPYEVIPGITAALACAAYAGIPLTHRDHAQSLCLITAHCQSSLDTLNWAALAQERQTLAFYMGVAGLPTIQQRLCEAGRTETTPFALIENGARAQQRVLTGTLKTLAHTAQTYAVRPPALLILGEVTALAEHLHWFGTTPLSAPCPPRTHPIS.

The segment at M1–L207 is precorrin-2 dehydrogenase /sirohydrochlorin ferrochelatase. Residues K25–V26 and P46–S47 each bind NAD(+). S132 carries the phosphoserine modification. Residues G220–S478 form a uroporphyrinogen-III C-methyltransferase region. D252 (proton acceptor) is an active-site residue. K274 (proton donor) is an active-site residue. S-adenosyl-L-methionine-binding positions include G305 to D307, V310, T335 to A336, M387, and G416.

The protein in the N-terminal section; belongs to the precorrin-2 dehydrogenase / sirohydrochlorin ferrochelatase family. In the C-terminal section; belongs to the precorrin methyltransferase family.

It catalyses the reaction uroporphyrinogen III + 2 S-adenosyl-L-methionine = precorrin-2 + 2 S-adenosyl-L-homocysteine + H(+). It carries out the reaction precorrin-2 + NAD(+) = sirohydrochlorin + NADH + 2 H(+). The catalysed reaction is siroheme + 2 H(+) = sirohydrochlorin + Fe(2+). It participates in cofactor biosynthesis; adenosylcobalamin biosynthesis; precorrin-2 from uroporphyrinogen III: step 1/1. It functions in the pathway cofactor biosynthesis; adenosylcobalamin biosynthesis; sirohydrochlorin from precorrin-2: step 1/1. The protein operates within porphyrin-containing compound metabolism; siroheme biosynthesis; precorrin-2 from uroporphyrinogen III: step 1/1. Its pathway is porphyrin-containing compound metabolism; siroheme biosynthesis; siroheme from sirohydrochlorin: step 1/1. It participates in porphyrin-containing compound metabolism; siroheme biosynthesis; sirohydrochlorin from precorrin-2: step 1/1. Multifunctional enzyme that catalyzes the SAM-dependent methylations of uroporphyrinogen III at position C-2 and C-7 to form precorrin-2 via precorrin-1. Then it catalyzes the NAD-dependent ring dehydrogenation of precorrin-2 to yield sirohydrochlorin. Finally, it catalyzes the ferrochelation of sirohydrochlorin to yield siroheme. The protein is Siroheme synthase of Xylella fastidiosa (strain M23).